The primary structure comprises 562 residues: Urocanate hydratase (562 aa).

NAD(+)-binding positions include 52-53 (GG), Gln-130, 176-178 (GMG), Glu-196, Arg-201, 242-243 (NA), 263-267 (QTSAH), 273-274 (YL), and Tyr-322. The active site involves Cys-410. Gly-492 is a binding site for NAD(+).

The protein belongs to the urocanase family. Requires NAD(+) as cofactor.

The protein resides in the cytoplasm. It carries out the reaction 4-imidazolone-5-propanoate = trans-urocanate + H2O. Its pathway is amino-acid degradation; L-histidine degradation into L-glutamate; N-formimidoyl-L-glutamate from L-histidine: step 2/3. In terms of biological role, catalyzes the conversion of urocanate to 4-imidazolone-5-propionate. The chain is Urocanate hydratase from Klebsiella pneumoniae subsp. pneumoniae (strain ATCC 700721 / MGH 78578).